Consider the following 297-residue polypeptide: 33 kDa chaperonin (297 aa).

Cystine bridges form between C232–C234 and C266–C269.

It belongs to the HSP33 family. Under oxidizing conditions two disulfide bonds are formed involving the reactive cysteines. Under reducing conditions zinc is bound to the reactive cysteines and the protein is inactive.

The protein resides in the cytoplasm. Redox regulated molecular chaperone. Protects both thermally unfolding and oxidatively damaged proteins from irreversible aggregation. Plays an important role in the bacterial defense system toward oxidative stress. This Azotobacter vinelandii (strain DJ / ATCC BAA-1303) protein is 33 kDa chaperonin.